The chain runs to 410 residues: Multifunctional CCA protein (410 aa).

ATP-binding residues include glycine 8 and arginine 11. CTP is bound by residues glycine 8 and arginine 11. Mg(2+) contacts are provided by aspartate 21 and aspartate 23. Positions 91, 137, and 140 each coordinate ATP. The CTP site is built by arginine 91, arginine 137, and arginine 140. In terms of domain architecture, HD spans 228 to 329 (TGVHVLSVLQ…LELLQSFDVY (102 aa)).

The protein belongs to the tRNA nucleotidyltransferase/poly(A) polymerase family. Bacterial CCA-adding enzyme type 1 subfamily. In terms of assembly, monomer. Can also form homodimers and oligomers. Mg(2+) is required as a cofactor. Requires Ni(2+) as cofactor.

The enzyme catalyses a tRNA precursor + 2 CTP + ATP = a tRNA with a 3' CCA end + 3 diphosphate. It catalyses the reaction a tRNA with a 3' CCA end + 2 CTP + ATP = a tRNA with a 3' CCACCA end + 3 diphosphate. Its function is as follows. Catalyzes the addition and repair of the essential 3'-terminal CCA sequence in tRNAs without using a nucleic acid template. Adds these three nucleotides in the order of C, C, and A to the tRNA nucleotide-73, using CTP and ATP as substrates and producing inorganic pyrophosphate. tRNA 3'-terminal CCA addition is required both for tRNA processing and repair. Also involved in tRNA surveillance by mediating tandem CCA addition to generate a CCACCA at the 3' terminus of unstable tRNAs. While stable tRNAs receive only 3'-terminal CCA, unstable tRNAs are marked with CCACCA and rapidly degraded. The polypeptide is Multifunctional CCA protein (Pseudomonas aeruginosa (strain ATCC 15692 / DSM 22644 / CIP 104116 / JCM 14847 / LMG 12228 / 1C / PRS 101 / PAO1)).